The following is a 352-amino-acid chain: Forkhead box protein D5 (352 aa).

2 disordered regions span residues 1 to 32 (MSLSQESGAHHDPQDYPVVSDEEDEIDILGED) and 47 to 92 (HSEM…GKAK). A compositionally biased stretch (acidic residues) spans 20-32 (SDEEDEIDILGED). Low complexity predominate over residues 73–82 (ESEGGTSKDS). The segment at residues 97–191 (KPPYSYIALI…DNGSFLRRRK (95 aa)) is a DNA-binding region (fork-head).

In terms of tissue distribution, expression begins in the newly forming dorsal mesoderm and is maintained during gastrulation at the dorsal blastopore lip (Spemann organizer). At the early neurula stages, expressed in a row of cells along the dorsal midline that are destined to become the fllor plate of the neural tube. At late neurula, expressed within the anterior and posterior poles of the embryo. After neural closure, expression is detected only in the tailtip, the otic vesicle and at the midbrain/hindbrain boundary.

It localises to the nucleus. Transcriptional repressor. This is Forkhead box protein D5 from Xenopus tropicalis (Western clawed frog).